Here is a 679-residue protein sequence, read N- to C-terminus: Transketolase 10 (679 aa).

Histidine 40 lines the substrate pocket. Thiamine diphosphate contacts are provided by residues histidine 80 and 129–131 (GPL). Aspartate 170 lines the Mg(2+) pocket. The thiamine diphosphate site is built by glycine 171 and asparagine 200. 2 residues coordinate Mg(2+): asparagine 200 and isoleucine 202. Positions 277, 371, and 398 each coordinate substrate. Histidine 277 contacts thiamine diphosphate. 2 residues coordinate thiamine diphosphate: glutamate 425 and phenylalanine 452. The Proton donor role is filled by glutamate 425. The substrate site is built by histidine 476, aspartate 484, and arginine 535.

This sequence belongs to the transketolase family. In terms of assembly, homodimer. Mg(2+) serves as cofactor. Ca(2+) is required as a cofactor. Requires Mn(2+) as cofactor. The cofactor is Co(2+). It depends on thiamine diphosphate as a cofactor. As to expression, leaves.

It catalyses the reaction D-sedoheptulose 7-phosphate + D-glyceraldehyde 3-phosphate = aldehydo-D-ribose 5-phosphate + D-xylulose 5-phosphate. Its function is as follows. Could be involved in the conversion of sugars, which are a major phenomenon in the rehydration process. Functionally, catalyzes the transfer of a two-carbon ketol group from a ketose donor to an aldose acceptor, via a covalent intermediate with the cofactor thiamine pyrophosphate. This is Transketolase 10 (TKT10) from Craterostigma plantagineum (Blue gem).